A 258-amino-acid polypeptide reads, in one-letter code: Imidazole glycerol phosphate synthase subunit HisF (258 aa).

Catalysis depends on residues Asp-11 and Asp-130.

The protein belongs to the HisA/HisF family. As to quaternary structure, heterodimer of HisH and HisF.

It is found in the cytoplasm. It catalyses the reaction 5-[(5-phospho-1-deoxy-D-ribulos-1-ylimino)methylamino]-1-(5-phospho-beta-D-ribosyl)imidazole-4-carboxamide + L-glutamine = D-erythro-1-(imidazol-4-yl)glycerol 3-phosphate + 5-amino-1-(5-phospho-beta-D-ribosyl)imidazole-4-carboxamide + L-glutamate + H(+). Its pathway is amino-acid biosynthesis; L-histidine biosynthesis; L-histidine from 5-phospho-alpha-D-ribose 1-diphosphate: step 5/9. Functionally, IGPS catalyzes the conversion of PRFAR and glutamine to IGP, AICAR and glutamate. The HisF subunit catalyzes the cyclization activity that produces IGP and AICAR from PRFAR using the ammonia provided by the HisH subunit. This is Imidazole glycerol phosphate synthase subunit HisF from Escherichia coli (strain ATCC 8739 / DSM 1576 / NBRC 3972 / NCIMB 8545 / WDCM 00012 / Crooks).